The following is a 193-amino-acid chain: Ion-translocating oxidoreductase complex subunit A (193 aa).

The next 6 membrane-spanning stretches (helical) occupy residues 5 to 25 (LLLFVGTVLVNNFVLVKFLGL), 39 to 59 (MGMGLATTFVMTLASICAWLI), 63 to 83 (ILIPLNLIYLRTLAFILVIAV), 102 to 122 (LLGIFLPLITTNCAVLGVALL), 134 to 154 (ALYGFSAAVGFSLVMVLFAAI), and 171 to 191 (AIALITAGLMSLAFMGFSGLV).

The protein belongs to the NqrDE/RnfAE family. As to quaternary structure, the complex is composed of six subunits: RsxA, RsxB, RsxC, RsxD, RsxE and RsxG.

Its subcellular location is the cell inner membrane. Its function is as follows. Part of a membrane-bound complex that couples electron transfer with translocation of ions across the membrane. Required to maintain the reduced state of SoxR. This chain is Ion-translocating oxidoreductase complex subunit A, found in Shigella boydii serotype 18 (strain CDC 3083-94 / BS512).